Here is a 382-residue protein sequence, read N- to C-terminus: MTTTPVEITPRPETGQLVFKPARRGKPPLHLADFDMAGRKEFLRAAGYPAFRASQLSKHYFERFEADPAAMTDLPAGQREELVAKAMPPLLKTVRQLRADEGMTVKSVHRLFDNAMVESVLMRYDKRVTMCISSQAGCGMNCPFCATGQSGLTRNLSAAEIVDQVVQGVRALRDGAVGDPEEAPQRVSNIVFMGMGEALANYKATMGAVHRIIDPSPEGLGISARGLTMSTVGLVPGIRKFTLEKLPITLALSLHAPDDELRDELIPINTRWKVDEALDAARDYYDATGRRVSIEYALIRDINDQGWRADLLGEKLNKRGGGWVHVNPIPLNPTPGSKWTASRPGVEQNFVERLRAHGIPTTVRDTRGSDIDGACGQLATEA.

Glu-118 serves as the catalytic Proton acceptor. The region spanning 124–370 (YDKRVTMCIS…TTVRDTRGSD (247 aa)) is the Radical SAM core domain. An intrachain disulfide couples Cys-131 to Cys-375. Cys-138, Cys-142, and Cys-145 together coordinate [4Fe-4S] cluster. S-adenosyl-L-methionine contacts are provided by residues 196-197 (GE), Ser-230, 253-255 (SLH), and Asn-332. Cys-375 (S-methylcysteine intermediate) is an active-site residue.

The protein belongs to the radical SAM superfamily. RlmN family. Requires [4Fe-4S] cluster as cofactor.

The protein localises to the cytoplasm. The enzyme catalyses adenosine(2503) in 23S rRNA + 2 reduced [2Fe-2S]-[ferredoxin] + 2 S-adenosyl-L-methionine = 2-methyladenosine(2503) in 23S rRNA + 5'-deoxyadenosine + L-methionine + 2 oxidized [2Fe-2S]-[ferredoxin] + S-adenosyl-L-homocysteine. It carries out the reaction adenosine(37) in tRNA + 2 reduced [2Fe-2S]-[ferredoxin] + 2 S-adenosyl-L-methionine = 2-methyladenosine(37) in tRNA + 5'-deoxyadenosine + L-methionine + 2 oxidized [2Fe-2S]-[ferredoxin] + S-adenosyl-L-homocysteine. Its function is as follows. Specifically methylates position 2 of adenine 2503 in 23S rRNA and position 2 of adenine 37 in tRNAs. This Kocuria rhizophila (strain ATCC 9341 / DSM 348 / NBRC 103217 / DC2201) protein is Probable dual-specificity RNA methyltransferase RlmN.